Here is a 302-residue protein sequence, read N- to C-terminus: 4-diphosphocytidyl-2-C-methyl-D-erythritol kinase (302 aa).

The active site involves K13. ATP is bound at residue 101–111 (PVASGIGGGSS). D143 is a catalytic residue.

This sequence belongs to the GHMP kinase family. IspE subfamily.

The catalysed reaction is 4-CDP-2-C-methyl-D-erythritol + ATP = 4-CDP-2-C-methyl-D-erythritol 2-phosphate + ADP + H(+). It functions in the pathway isoprenoid biosynthesis; isopentenyl diphosphate biosynthesis via DXP pathway; isopentenyl diphosphate from 1-deoxy-D-xylulose 5-phosphate: step 3/6. Its function is as follows. Catalyzes the phosphorylation of the position 2 hydroxy group of 4-diphosphocytidyl-2C-methyl-D-erythritol. The chain is 4-diphosphocytidyl-2-C-methyl-D-erythritol kinase from Granulibacter bethesdensis (strain ATCC BAA-1260 / CGDNIH1).